The primary structure comprises 432 residues: Transcriptional adapter 3 (432 aa).

Lysine 21 is covalently cross-linked (Glycyl lysine isopeptide (Lys-Gly) (interchain with G-Cter in SUMO2)). Residues 40–69 (IEELDTLQLELETLLSSASRRLRVLEAETQ) adopt a coiled-coil conformation. Positions 87–127 (ARDHELGAPPKHGKPKKQKLEGKTGHGPGPGPGRPKSKNVQ) are disordered. Lysine 129 participates in a covalent cross-link: Glycyl lysine isopeptide (Lys-Gly) (interchain with G-Cter in SUMO2). The disordered stretch occupies residues 272 to 319 (NIISPMEDSPIPDMSGKESGADGASTSPRNQNKPFSVPHTKSLESRIK). Phosphoserine occurs at positions 280 and 298. Positions 295-305 (ASTSPRNQNKP) are enriched in polar residues. The stretch at 367–407 (LLRLAKEEVSRQELRQRVRMADNEVMDAFRKIMAARQKKRT) forms a coiled coil. Lysine 418 is subject to N6-acetyllysine.

Belongs to the NGG1 family. In terms of assembly, the PCAF complex is composed of a number of TBP-associated factors (TAFS), such as TAF5, TAF5L, TAF6, TAF6L, TAF9, TAF10 and TAF12, PCAF, and also PCAF-associated factors (PAFs), such as TADA2L/ADA2, TADA3L/ADA3 and SPT3. Interacts directly with TADA2L and PCAF and also with the high-risk HPV oncoprotein E6. Component of the STAGA transcription coactivator-HAT complex, at least composed of SUPT3H, GCN5L2, TAF5L, TAF6L, SUPT7L, TADA3L, TAD1L, TAF10, TAF12, TRRAP and TAF9. Component of the TFTC-HAT complex. Component of the ADA2A-containing complex (ATAC), composed of KAT14, KAT2A, TADA2L, TADA3L, ZZ3, MBIP, WDR5, YEATS2, CCDC101 and DR1.

The protein localises to the nucleus. Functionally, functions as a component of the PCAF complex. The PCAF complex is capable of efficiently acetylating histones in a nucleosomal context. The PCAF complex could be considered as the human version of the yeast SAGA complex. Also known as a coactivator for p53/TP53-dependent transcriptional activation. Component of the ATAC complex, a complex with histone acetyltransferase activity on histones H3 and H4. This is Transcriptional adapter 3 (Tada3) from Rattus norvegicus (Rat).